Consider the following 311-residue polypeptide: tRNA dimethylallyltransferase (311 aa).

19–26 (GPSGSGKS) lines the ATP pocket. 21–26 (SGSGKS) is a binding site for substrate. The interval 44–47 (DSLS) is interaction with substrate tRNA.

This sequence belongs to the IPP transferase family. Monomer. Mg(2+) is required as a cofactor.

The enzyme catalyses adenosine(37) in tRNA + dimethylallyl diphosphate = N(6)-dimethylallyladenosine(37) in tRNA + diphosphate. In terms of biological role, catalyzes the transfer of a dimethylallyl group onto the adenine at position 37 in tRNAs that read codons beginning with uridine, leading to the formation of N6-(dimethylallyl)adenosine (i(6)A). In Helicobacter pylori (strain ATCC 700392 / 26695) (Campylobacter pylori), this protein is tRNA dimethylallyltransferase.